Here is a 408-residue protein sequence, read N- to C-terminus: 8-amino-7-oxononanoate synthase (408 aa).

Position 20 (Arg-20) interacts with substrate. Gly-119–Tyr-120 provides a ligand contact to pyridoxal 5'-phosphate. Residue His-144 coordinates substrate. Pyridoxal 5'-phosphate is bound by residues Ser-190, His-218, and Thr-246. Lys-249 carries the N6-(pyridoxal phosphate)lysine modification. Residue Thr-372 coordinates substrate.

Belongs to the class-II pyridoxal-phosphate-dependent aminotransferase family. BioF subfamily. In terms of assembly, homodimer. It depends on pyridoxal 5'-phosphate as a cofactor.

The catalysed reaction is 6-carboxyhexanoyl-[ACP] + L-alanine + H(+) = (8S)-8-amino-7-oxononanoate + holo-[ACP] + CO2. It functions in the pathway cofactor biosynthesis; biotin biosynthesis. Catalyzes the decarboxylative condensation of pimeloyl-[acyl-carrier protein] and L-alanine to produce 8-amino-7-oxononanoate (AON), [acyl-carrier protein], and carbon dioxide. The sequence is that of 8-amino-7-oxononanoate synthase from Leptothrix cholodnii (strain ATCC 51168 / LMG 8142 / SP-6) (Leptothrix discophora (strain SP-6)).